A 308-amino-acid polypeptide reads, in one-letter code: MLSLRTPGFQGESVQFSPLVENKIAVAAVTHYGLGGSGRLYIHDVTPKGIQVCQHYDVEDSLFGVRWSQNCENQVYACCGDGSLRLFDLTMPSKPIHKWKEHKAEIVAIDTNTVDRRIVVTGSWDGTIKLWLGNLPNSVQTLNNGSNSRILTVATHYSSPNLLGYTSSDGLCKFWDFRSSDKFMSIEIPNQITCMNWSKSNHRMVYTADNNNLVYCYDIANLKTPLSVLSGHQLAVRSIKSSNSAHDLLATASYDMTSRIFDPEQHSCIRKVDLHSEFVRDVDWSDFGDGSWIASVGWDESLYIWNAF.

6 WD repeats span residues 57–88, 101–132, 145–176, 187–218, 231–262, and 274–306; these read DVEDSLFGVRWSQNCENQVYACCGDGSLRLFD, EHKAEIVAIDTNTVDRRIVVTGSWDGTIKLWL, GSNSRILTVATHYSSPNLLGYTSSDGLCKFWD, EIPNQITCMNWSKSNHRMVYTADNNNLVYCYD, GHQLAVRSIKSSNSAHDLLATASYDMTSRIFD, and LHSEFVRDVDWSDFGDGSWIASVGWDESLYIWN.

It belongs to the WD repeat peroxin-7 family. As to quaternary structure, interacts with PEX21.

Its subcellular location is the cytoplasm. The protein resides in the cytosol. The protein localises to the peroxisome matrix. Receptor required for the peroxisomal import of proteins containing a C-terminal PTS2-type peroxisomal targeting signal, such as 3-oxoacyl-CoA thiolase. Specifically binds to cargo proteins containing a PTS2 peroxisomal targeting signal in the cytosol. Cargo protein-binding triggers interaction with PEX21 and formation of a ternary complex composed of PEX21 and PEX7 along with PTS2-containing cargo proteins, which is tranlocated into peroxisomes by passing through the PEX13-PEX14 docking complex. This is Peroxisomal targeting signal 2 receptor (pex7) from Schizosaccharomyces pombe (strain 972 / ATCC 24843) (Fission yeast).